Here is a 475-residue protein sequence, read N- to C-terminus: UDP-glycosyltransferase 708A6 (475 aa).

Residues S286, 348-349 (WV), 366-374 (HCGWNSLTE), and 388-391 (FGDQ) contribute to the UDP-alpha-D-glucose site.

This sequence belongs to the UDP-glycosyltransferase family. As to expression, expressed in radicles, hypocotyls and juvenile leaves. Expressed at low levels in roots.

Its function is as follows. Bifunctional glycosyltransferase that can produce both C- and O-glycosidated flavonoids. Converts 2-hydroxynaringenin to isovitexin. Converts eriodictyol to orientin and isoorientin. Converts naringenin and eriodictyol to naringenin 7-O-glucoside and eriodictyol 7-O-glucoside, respectively. This is UDP-glycosyltransferase 708A6 from Zea mays (Maize).